A 307-amino-acid chain; its full sequence is Probable deoxyhypusine synthase (307 aa).

Lysine 278 functions as the Nucleophile in the catalytic mechanism.

This sequence belongs to the deoxyhypusine synthase family. It depends on NAD(+) as a cofactor.

It carries out the reaction [eIF5A protein]-L-lysine + spermidine = [eIF5A protein]-deoxyhypusine + propane-1,3-diamine. Its pathway is protein modification; eIF5A hypusination. Catalyzes the NAD-dependent oxidative cleavage of spermidine and the subsequent transfer of the butylamine moiety of spermidine to the epsilon-amino group of a specific lysine residue of the eIF-5A precursor protein to form the intermediate deoxyhypusine residue. In Methanothermobacter thermautotrophicus (strain ATCC 29096 / DSM 1053 / JCM 10044 / NBRC 100330 / Delta H) (Methanobacterium thermoautotrophicum), this protein is Probable deoxyhypusine synthase (dys).